The primary structure comprises 155 residues: MKIYIIAVGKIKENYISDGIVFYLKKLRPYCEIEIKEVEEEKAPQNLSEKEKEEILRKEGERILSKIKKGSFVVSLAIEGKEIDSYKFSQFIKATFQSGYREMTFVIGGSLGLWENIKKQSHLNLSFSKMTFPHQLMRLILLEQLYLAFDGKNHL.

S-adenosyl-L-methionine contacts are provided by residues L76, G108, and 127-132 (FSKMTF).

This sequence belongs to the RNA methyltransferase RlmH family. In terms of assembly, homodimer.

The protein localises to the cytoplasm. The enzyme catalyses pseudouridine(1915) in 23S rRNA + S-adenosyl-L-methionine = N(3)-methylpseudouridine(1915) in 23S rRNA + S-adenosyl-L-homocysteine + H(+). Functionally, specifically methylates the pseudouridine at position 1915 (m3Psi1915) in 23S rRNA. The sequence is that of Ribosomal RNA large subunit methyltransferase H 1 from Thermoanaerobacter pseudethanolicus (strain ATCC 33223 / 39E) (Clostridium thermohydrosulfuricum).